The sequence spans 319 residues: Lipopolysaccharide heptosyltransferase 1 (319 aa).

Positions 187, 188, 192, 222, 242, 261, 262, 263, and 266 each coordinate ADP-L-glycero-beta-D-manno-heptose.

This sequence belongs to the glycosyltransferase 9 family.

The protein resides in the cell inner membrane. The catalysed reaction is an alpha-Kdo-(2-&gt;4)-alpha-Kdo-(2-&gt;6)-lipid A + ADP-L-glycero-beta-D-manno-heptose = an L-alpha-D-Hep-(1-&gt;5)-[alpha-Kdo-(2-&gt;4)]-alpha-Kdo-(2-&gt;6)-lipid A + ADP + H(+). It catalyses the reaction alpha-Kdo-(2-&gt;4)-alpha-Kdo-(2-&gt;6)-lipid A (E. coli) + ADP-L-glycero-beta-D-manno-heptose = L-alpha-D-Hep-(1-&gt;5)-[alpha-Kdo-(2-&gt;4)]-alpha-Kdo-(2-&gt;6)-lipid A (E. coli) + ADP + H(+). It functions in the pathway bacterial outer membrane biogenesis; LPS core biosynthesis. Functionally, glycosyltransferase involved in the biosynthesis of the core oligosaccharide region of lipopolysaccharide (LPS). Catalyzes the addition of the first heptose unit to one 3-deoxy-D-manno-octulosonic acid (Kdo) residue of the Kdo2-lipid A module. The analog ADP-mannose can serve as an alternative donor in place of ADP-L-glycero-D-manno-heptose for the glycosylation of Kdo2-lipid A. Displays no activity with ADP-glucose, GDP-mannose, UDP-glucose or UDP-galactose. The protein is Lipopolysaccharide heptosyltransferase 1 of Escherichia coli (strain K12).